Here is a 402-residue protein sequence, read N- to C-terminus: MTGIIHSLLDTDLYKFTMLQVVLHQFPQTHSLYEFRCRNASTVYPLADIKEDLEAELDALCRLRFTHDELGYLRSLRFIKSDFVDYLELFQLQRRFVEIGTDDKDRLNIRIEGPMIQAMFFEIFILAIVNELYFRRLETPAVIEEGERRLQAKAARLKEIAAAQNPDDPPFLISDFGTRRRYKLAWQEHVIRTLLEAAPSIVRGTSNVFLAKKLGITPIGTMAHEFLQAFQALDVRLRNFQKAALESWVHEYRGDLGVALTDVVGMDAFLRDFDLYFAKLFDGLRHDSGDPYVWGDKAYAHYQKLKIDSRTKMLTFSDGLDIERSWALHQYFKDRFKTGFGIGTNLTNDMGHTPLNIVLKLVECNGQSVAKLSDSPGKTMTNNSTFLAYLRQVFDVPEPETP.

Phosphohistidine; by autocatalysis is present on His-224.

The protein belongs to the NAPRTase family. In terms of processing, transiently phosphorylated on a His residue during the reaction cycle. Phosphorylation strongly increases the affinity for substrates and increases the rate of nicotinate D-ribonucleotide production. Dephosphorylation regenerates the low-affinity form of the enzyme, leading to product release.

It carries out the reaction nicotinate + 5-phospho-alpha-D-ribose 1-diphosphate + ATP + H2O = nicotinate beta-D-ribonucleotide + ADP + phosphate + diphosphate. The protein operates within cofactor biosynthesis; NAD(+) biosynthesis; nicotinate D-ribonucleotide from nicotinate: step 1/1. Catalyzes the synthesis of beta-nicotinate D-ribonucleotide from nicotinate and 5-phospho-D-ribose 1-phosphate at the expense of ATP. This is Nicotinate phosphoribosyltransferase from Neisseria meningitidis serogroup C (strain 053442).